We begin with the raw amino-acid sequence, 316 residues long: Glutathione synthetase (316 aa).

Residues 124-311 form the ATP-grasp domain; it reads NEKLAALLFP…IAGLLFDAIE (188 aa). 151–208 is an ATP binding site; the sequence is FVLAHGQAVLKPLDGMGGRSIFRSGTGDPNLNVILETLTDGGRKLTLAQRFIPDITAG. 2 residues coordinate Mg(2+): glutamate 282 and asparagine 284.

This sequence belongs to the prokaryotic GSH synthase family. The cofactor is Mg(2+). Mn(2+) is required as a cofactor.

It catalyses the reaction gamma-L-glutamyl-L-cysteine + glycine + ATP = glutathione + ADP + phosphate + H(+). The protein operates within sulfur metabolism; glutathione biosynthesis; glutathione from L-cysteine and L-glutamate: step 2/2. This chain is Glutathione synthetase, found in Xanthomonas campestris pv. campestris (strain ATCC 33913 / DSM 3586 / NCPPB 528 / LMG 568 / P 25).